We begin with the raw amino-acid sequence, 264 residues long: MEMO1 family protein Mbur_2394 (264 aa).

Belongs to the MEMO1 family.

The polypeptide is MEMO1 family protein Mbur_2394 (Methanococcoides burtonii (strain DSM 6242 / NBRC 107633 / OCM 468 / ACE-M)).